A 77-amino-acid polypeptide reads, in one-letter code: Subtilisin-chymotrypsin inhibitor CI-1C (77 aa).

It belongs to the protease inhibitor I13 (potato type I serine protease inhibitor) family.

Functionally, inhibits both subtilisin and chymotrypsin. The chain is Subtilisin-chymotrypsin inhibitor CI-1C from Hordeum vulgare (Barley).